Consider the following 100-residue polypeptide: NADH-quinone oxidoreductase subunit K (100 aa).

The next 3 membrane-spanning stretches (helical) occupy residues 4–24 (LSWY…GFVI), 29–49 (IVML…FASF), and 60–80 (IFVL…LAIV).

It belongs to the complex I subunit 4L family. In terms of assembly, NDH-1 is composed of 14 different subunits. Subunits NuoA, H, J, K, L, M, N constitute the membrane sector of the complex.

Its subcellular location is the cell inner membrane. It catalyses the reaction a quinone + NADH + 5 H(+)(in) = a quinol + NAD(+) + 4 H(+)(out). NDH-1 shuttles electrons from NADH, via FMN and iron-sulfur (Fe-S) centers, to quinones in the respiratory chain. The immediate electron acceptor for the enzyme in this species is believed to be ubiquinone. Couples the redox reaction to proton translocation (for every two electrons transferred, four hydrogen ions are translocated across the cytoplasmic membrane), and thus conserves the redox energy in a proton gradient. This Thermodesulfovibrio yellowstonii (strain ATCC 51303 / DSM 11347 / YP87) protein is NADH-quinone oxidoreductase subunit K.